Consider the following 208-residue polypeptide: Proteasome subunit beta 2 (208 aa).

Positions 1 to 9 (MSGKKIVSK) are cleaved as a propeptide — removed in mature form; by autocatalysis. The active-site Nucleophile is the T10.

The protein belongs to the peptidase T1B family. The 20S proteasome core is composed of 14 alpha and 14 beta subunits that assemble into four stacked heptameric rings, resulting in a barrel-shaped structure. The two inner rings, each composed of seven catalytic beta subunits, are sandwiched by two outer rings, each composed of seven alpha subunits. The catalytic chamber with the active sites is on the inside of the barrel. Has a gated structure, the ends of the cylinder being occluded by the N-termini of the alpha-subunits. Is capped at one or both ends by the proteasome regulatory ATPase, PAN.

It localises to the cytoplasm. The catalysed reaction is Cleavage of peptide bonds with very broad specificity.. Its activity is regulated as follows. The formation of the proteasomal ATPase PAN-20S proteasome complex, via the docking of the C-termini of PAN into the intersubunit pockets in the alpha-rings, triggers opening of the gate for substrate entry. Interconversion between the open-gate and close-gate conformations leads to a dynamic regulation of the 20S proteasome proteolysis activity. Its function is as follows. Component of the proteasome core, a large protease complex with broad specificity involved in protein degradation. The polypeptide is Proteasome subunit beta 2 (Staphylothermus marinus (strain ATCC 43588 / DSM 3639 / JCM 9404 / F1)).